A 393-amino-acid polypeptide reads, in one-letter code: Putative competence-damage inducible protein (393 aa).

It belongs to the CinA family.

This is Putative competence-damage inducible protein from Streptococcus suis (strain 05ZYH33).